A 450-amino-acid polypeptide reads, in one-letter code: UPF0210 protein MK1214 (450 aa).

It belongs to the UPF0210 family.

The protein is UPF0210 protein MK1214 of Methanopyrus kandleri (strain AV19 / DSM 6324 / JCM 9639 / NBRC 100938).